The primary structure comprises 179 residues: MAVFKTTLWRLISGTLGIICLSLMSTLGILLKNSFTKLSIEPAFTPGPNIELQKDSDCCSCQEKWVGYRCNCYFISSEQKTWNESRHLCASQKSSLLQLQNTDELDFMSSSQQFYWIGLSYSEEHTAWLWENGSALSQYLFPSFETFNTKNCIAYNPNGNALDESCEDKNRYICKQQLI.

At 1–10 the chain is on the cytoplasmic side; sequence MAVFKTTLWR. A helical; Signal-anchor for type II membrane protein membrane pass occupies residues 11-31; it reads LISGTLGIICLSLMSTLGILL. The Extracellular portion of the chain corresponds to 32 to 179; that stretch reads KNSFTKLSIE…NRYICKQQLI (148 aa). 2 cysteine pairs are disulfide-bonded: C58-C70 and C61-C72. The 108-residue stretch at 68–175 folds into the C-type lectin domain; sequence YRCNCYFISS…CEDKNRYICK (108 aa). 2 N-linked (GlcNAc...) asparagine glycosylation sites follow: N83 and N132. Intrachain disulfides connect C89-C174 and C152-C166.

Can form disulfide-bonded heterodimer with NKG2 family members KLRC1 and KLRC2. KLRD1-KLRC1 heterodimer interacts with peptide-bound HLA-E-B2M heterotrimeric complex. KLRD1 plays a prominent role in directly interacting with HLA-E. KLRD1-KLRC1 interacts with much higher affinity with peptide-bound HLA-E-B2M than KLRD1-KLRC2. Interacts with the adapter protein TYROBP/DAP12; this interaction is required for cell surface expression and cell activation. As to expression, expressed in NK cell subsets (at protein level). Expressed in memory/effector CD8-positive alpha-beta T cell subsets (at protein level). Expressed in melanoma-specific cytotoxic T cell clones (at protein level). Expressed in terminally differentiated cytotoxic gamma-delta T cells (at protein level). KLRD1-KLRC1 and KLRD1-KLRC2 are differentially expressed in NK and T cell populations, with only minor subsets expressing both receptor complexes (at protein level).

The protein resides in the cell membrane. Functionally, immune receptor involved in self-nonself discrimination. In complex with KLRC1 or KLRC2 on cytotoxic and regulatory lymphocyte subsets, recognizes non-classical major histocompatibility (MHC) class Ib molecule HLA-E loaded with self-peptides derived from the signal sequence of classical MHC class Ia and non-classical MHC class Ib molecules. Enables cytotoxic cells to monitor the expression of MHC class I molecules in healthy cells and to tolerate self. Primarily functions as a ligand binding subunit as it lacks the capacity to signal. Its function is as follows. KLRD1-KLRC1 acts as an immune inhibitory receptor. Key inhibitory receptor on natural killer (NK) cells that regulates their activation and effector functions. Dominantly counteracts T cell receptor signaling on a subset of memory/effector CD8-positive T cells as part of an antigen-driven response to avoid autoimmunity. On intraepithelial CD8-positive gamma-delta regulatory T cells triggers TGFB1 secretion, which in turn limits the cytotoxic programming of intraepithelial CD8-positive alpha-beta T cells, distinguishing harmless from pathogenic antigens. In HLA-E-rich tumor microenvironment, acts as an immune inhibitory checkpoint and may contribute to progressive loss of effector functions of NK cells and tumor-specific T cells, a state known as cell exhaustion. Upon HLA-E-peptide binding, transmits intracellular signals through KLRC1 immunoreceptor tyrosine-based inhibition motifs (ITIMs) by recruiting INPP5D/SHIP-1 and INPPL1/SHIP-2 tyrosine phosphatases to ITIMs, and ultimately opposing signals transmitted by activating receptors through dephosphorylation of proximal signaling molecules. KLRD1-KLRC2 acts as an immune activating receptor. On cytotoxic lymphocyte subsets recognizes HLA-E loaded with signal sequence-derived peptides from non-classical MHC class Ib HLA-G molecules, likely playing a role in the generation and effector functions of adaptive NK cells and in maternal-fetal tolerance during pregnancy. Regulates the effector functions of terminally differentiated cytotoxic lymphocyte subsets, and in particular may play a role in adaptive NK cell response to viral infection. Upon HLA-E-peptide binding, transmits intracellular signals via the adapter protein TYROBP/DAP12, triggering the phosphorylation of proximal signaling molecules and cell activation. In terms of biological role, (Microbial infection) Viruses like human cytomegalovirus have evolved an escape mechanism whereby virus-induced down-regulation of host MHC class I molecules is coupled to the binding of viral peptides to HLA-E, restoring HLA-E expression and inducing HLA-E-dependent NK cell immune tolerance to infected cells. Recognizes HLA-E in complex with human cytomegalovirus UL40-derived peptide (VMAPRTLIL) and inhibits NK cell cytotoxicity. Functionally, (Microbial infection) May recognize HLA-E in complex with HIV-1 gag/Capsid protein p24-derived peptide (AISPRTLNA) on infected cells and may inhibit NK cell cytotoxicity, a mechanism that allows HIV-1 to escape immune recognition. Its function is as follows. (Microbial infection) Upon SARS-CoV-2 infection, may contribute to functional exhaustion of cytotoxic NK cells and CD8-positive T cells. On NK cells, may recognize HLA-E in complex with SARS-CoV-2 S/Spike protein S1-derived peptide (LQPRTFLL) expressed on the surface of lung epithelial cells, inducing NK cell exhaustion and dampening antiviral immune surveillance. The protein is Natural killer cells antigen CD94 (KLRD1) of Homo sapiens (Human).